A 384-amino-acid polypeptide reads, in one-letter code: MKHVFPTYNRFPVDIVKGNGTVVKDATGKTYLDFTSGIAVCNLGHCPENVTEAIQSQLANIWHTSNLYECALQDSVAELITDGTDKLVFFCNSGTEANEAALKLARKYTGKEKIITFEKSFHGRTFGSMSATGQAKIHQGFGRLVPGFTYVPYNDIESFKTELDENTAAVMLEVIQGEGGVIPGNAAWLMEVQMLCKKAGALLIIDEVQTGLGRTGTLFGFQQTFLDPDIFTLAKGLGNGLPIGAMVGKEHLSSAFGPGSHGSTFGGNKLALAAAKEILLTMKQTGFLEEVNAKAAYFRNLLEEHFEQLENVVAIRGEGFLIGIELGSSAAPVVTELRDKGLLILTAGPNILRILPPLTVSYAEIDQAISILKSVLEKQLIGSE.

Pyridoxal 5'-phosphate contacts are provided by residues 94–95 (GT) and Phe121. Arg124 provides a ligand contact to N(2)-acetyl-L-ornithine. 206 to 209 (DEVQ) provides a ligand contact to pyridoxal 5'-phosphate. Lys235 bears the N6-(pyridoxal phosphate)lysine mark. Position 263 (Ser263) interacts with N(2)-acetyl-L-ornithine. Thr264 lines the pyridoxal 5'-phosphate pocket.

This sequence belongs to the class-III pyridoxal-phosphate-dependent aminotransferase family. ArgD subfamily. Homodimer. It depends on pyridoxal 5'-phosphate as a cofactor.

The protein resides in the cytoplasm. It catalyses the reaction N(2)-acetyl-L-ornithine + 2-oxoglutarate = N-acetyl-L-glutamate 5-semialdehyde + L-glutamate. Its pathway is amino-acid biosynthesis; L-arginine biosynthesis; N(2)-acetyl-L-ornithine from L-glutamate: step 4/4. The polypeptide is Acetylornithine aminotransferase (Listeria innocua serovar 6a (strain ATCC BAA-680 / CLIP 11262)).